Here is a 366-residue protein sequence, read N- to C-terminus: Carbamoyl phosphate synthase small chain (366 aa).

Residues M1–D168 form a CPSase region. The L-glutamine site is built by S45, G220, and G222. The region spanning K172–E363 is the Glutamine amidotransferase type-1 domain. The active-site Nucleophile is the C247. Positions 248, 251, 289, 291, and 292 each coordinate L-glutamine. Residues H336 and E338 contribute to the active site.

The protein belongs to the CarA family. As to quaternary structure, composed of two chains; the small (or glutamine) chain promotes the hydrolysis of glutamine to ammonia, which is used by the large (or ammonia) chain to synthesize carbamoyl phosphate. Tetramer of heterodimers (alpha,beta)4.

It carries out the reaction hydrogencarbonate + L-glutamine + 2 ATP + H2O = carbamoyl phosphate + L-glutamate + 2 ADP + phosphate + 2 H(+). The catalysed reaction is L-glutamine + H2O = L-glutamate + NH4(+). Its pathway is amino-acid biosynthesis; L-arginine biosynthesis; carbamoyl phosphate from bicarbonate: step 1/1. It participates in pyrimidine metabolism; UMP biosynthesis via de novo pathway; (S)-dihydroorotate from bicarbonate: step 1/3. Functionally, small subunit of the glutamine-dependent carbamoyl phosphate synthetase (CPSase). CPSase catalyzes the formation of carbamoyl phosphate from the ammonia moiety of glutamine, carbonate, and phosphate donated by ATP, constituting the first step of 2 biosynthetic pathways, one leading to arginine and/or urea and the other to pyrimidine nucleotides. The small subunit (glutamine amidotransferase) binds and cleaves glutamine to supply the large subunit with the substrate ammonia. This chain is Carbamoyl phosphate synthase small chain, found in Methanococcus maripaludis (strain C6 / ATCC BAA-1332).